Reading from the N-terminus, the 248-residue chain is MTILFLTMVISYFSCMKAAPMKEANVRGQGSLAYPGMRTHGTLESVNGPKVGSRGLTSSLADTVEHVIEELLDEDQKVRPSEENNKDADMYTSRVMLSSQVPLEPPLLFLLEEYKNYLDAANMSMRVRRHSDPARRGELSVCDSISEWVTAADKKTAVDMSGGTVTVLEKVPVSKGQLKQYFYETKCNPMGYTKEGCRGIDKRHWDSQCRTTQSYVRALTMDSKKRIGWRFIRIDTSCVCTLTIKRGR.

An N-terminal signal peptide occupies residues 1 to 18 (MTILFLTMVISYFSCMKA). Positions 19-129 (APMKEANVRG…AANMSMRVRR (111 aa)) are excised as a propeptide. N-linked (GlcNAc...) asparagine glycosylation occurs at Asn122. Cystine bridges form between Cys142-Cys209, Cys187-Cys238, and Cys197-Cys240.

It belongs to the NGF-beta family. As to quaternary structure, monomers and homodimers. Binds to NTRK2/TRKB. Can form heterodimers with other neurotrophin family members, such as NTF3 and NTF4 (in vitro), but the physiological relevance of this is not clear. BDNF precursor form: interacts with the heterodimer formed by NGFR and SORCS2. Mature BDNF has much lower affinity for the heterodimer formed by NGFR and SORCS2. N-glycosylated and glycosulfated, contrary to mature BDNF. In terms of processing, mature BDNF is produced by proteolytic removal of the propeptide, catalyzed by a FURIN family member. In addition, the precursor form is proteolytically cleaved within the propeptide, but this is not an obligatory intermediate for the production of mature BDNF. Can be converted into mature BDNF by plasmin (PLG).

The protein resides in the secreted. Functionally, important signaling molecule that activates signaling cascades downstream of NTRK2. During development, promotes the survival and differentiation of selected neuronal populations of the peripheral and central nervous systems. Participates in axonal growth, pathfinding and in the modulation of dendritic growth and morphology. Major regulator of synaptic transmission and plasticity at adult synapses in many regions of the CNS. The versatility of BDNF is emphasized by its contribution to a range of adaptive neuronal responses including long-term potentiation (LTP), long-term depression (LTD), certain forms of short-term synaptic plasticity, as well as homeostatic regulation of intrinsic neuronal excitability. Its function is as follows. Important signaling molecule that activates signaling cascades downstream of NTRK2. Activates signaling cascades via the heterodimeric receptor formed by NGFR and SORCS2. Signaling via NGFR and SORCS2 plays a role in synaptic plasticity and long-term depression (LTD). Binding to NGFR and SORCS2 promotes neuronal apoptosis. Promotes neuronal growth cone collapse. The protein is Neurotrophic factor BDNF precursor form (BDNF) of Lipotes vexillifer (Yangtze river dolphin).